The following is a 313-amino-acid chain: Putative phosphoribosylaminoimidazole-succinocarboxamide synthase 2 (313 aa).

Belongs to the SAICAR synthetase family.

The enzyme catalyses 5-amino-1-(5-phospho-D-ribosyl)imidazole-4-carboxylate + L-aspartate + ATP = (2S)-2-[5-amino-1-(5-phospho-beta-D-ribosyl)imidazole-4-carboxamido]succinate + ADP + phosphate + 2 H(+). The protein operates within purine metabolism; IMP biosynthesis via de novo pathway; 5-amino-1-(5-phospho-D-ribosyl)imidazole-4-carboxamide from 5-amino-1-(5-phospho-D-ribosyl)imidazole-4-carboxylate: step 1/2. The protein is Putative phosphoribosylaminoimidazole-succinocarboxamide synthase 2 (purC2) of Mesorhizobium japonicum (strain LMG 29417 / CECT 9101 / MAFF 303099) (Mesorhizobium loti (strain MAFF 303099)).